The sequence spans 153 residues: UPF0178 protein Atu1478 (153 aa).

It belongs to the UPF0178 family.

The chain is UPF0178 protein Atu1478 from Agrobacterium fabrum (strain C58 / ATCC 33970) (Agrobacterium tumefaciens (strain C58)).